A 180-amino-acid chain; its full sequence is Chorion protein S19 (180 aa).

Residues 1–21 (MNTFATLAVLFCACLIGNCHG) form the signal peptide.

The protein belongs to the chorion protein S19 family.

The protein resides in the secreted. Functionally, chorion membrane (egg shell) protein; plays a role in protecting the egg from the environment. The polypeptide is Chorion protein S19 (Cp19) (Drosophila subobscura (Fruit fly)).